Here is a 404-residue protein sequence, read N- to C-terminus: Zinc transporter 10 (404 aa).

An N-terminal signal peptide occupies residues 1–22 (MESSSSSSYIPFIRQIAASVSA). Topologically, residues 23–49 (ASCDAVVGGGGDKDEECRDEAAALRLK) are extracellular. The chain crosses the membrane as a helical span at residues 50–70 (MVAVAAILIAGAAGVAIPLVG). Residues 71 to 86 (RRRRGGGGGGGGGASS) lie on the Cytoplasmic side of the membrane. The helical transmembrane segment at 87–107 (GGLFVLAKAFAAGVILATGFV) threads the bilayer. The Extracellular portion of the chain corresponds to 108–129 (HMLHDAEHALSNPCLPHSPWRR). A helical transmembrane segment spans residues 130–150 (FPFPGFVAMLAALATLVVDFV). Over 151–248 (GTHFYERKHR…GHEEGPSARH (98 aa)) the chain is Cytoplasmic. Residues 249–269 (VVVSQILELGIVSHSVIIGLS) traverse the membrane as a helical segment. At 270 to 280 (LGVSQSPCTIK) the chain is on the extracellular side. Residues 281 to 301 (PLVAALSFHQFFEGFALGGCI) traverse the membrane as a helical segment. At 302–311 (SEAQLKNFSA) the chain is on the cytoplasmic side. A helical transmembrane segment spans residues 312 to 332 (FLMAFFFAITTPAGITVGAAV). The Extracellular portion of the chain corresponds to 333–343 (ASFYNPNSPRA). The helical transmembrane segment at 344–364 (LVVEGILDSMSAGILIYMALV) threads the bilayer. At 365–383 (DLIAADFLSRKMSCNPRLQ) the chain is on the cytoplasmic side. A helical transmembrane segment spans residues 384–404 (VGSYIALFLGAMAMAALALWA).

It belongs to the ZIP transporter (TC 2.A.5) family.

The protein resides in the cell membrane. Its function is as follows. Zinc transporter that may be involved in zinc uptake from the rhizosphere. The protein is Zinc transporter 10 (ZIP10) of Oryza sativa subsp. japonica (Rice).